A 235-amino-acid polypeptide reads, in one-letter code: C-type lectin domain family 2 member D-related protein (235 aa).

Residues 1–50 are disordered; it reads MPSSAHLQDPPPHLSRTLTQDEEQTSLRQSSSCGPSTTSASASESLSGST. The Cytoplasmic portion of the chain corresponds to 1–75; that stretch reads MPSSAHLQDP…KIIPTESAAK (75 aa). Positions 30-50 are enriched in low complexity; sequence SSSCGPSTTSASASESLSGST. A helical; Signal-anchor for type II membrane protein transmembrane segment spans residues 76 to 96; it reads LLCCYAVFMALTVVVIALSIA. Residues 97–235 lie on the Extracellular side of the membrane; that stretch reads LSVKKTPQIS…KLNSYTSQCP (139 aa). One can recognise a C-type lectin domain in the interval 121–232; that stretch reads FGNKCYYFNE…ICSKLNSYTS (112 aa). Residue asparagine 134 is glycosylated (N-linked (GlcNAc...) asparagine).

It is found in the cell membrane. Its function is as follows. Lectin-type cell surface receptor. This Rattus norvegicus (Rat) protein is C-type lectin domain family 2 member D-related protein.